The primary structure comprises 113 residues: uncharacterized protein (113 aa).

This is an uncharacterized protein from Listeria innocua serovar 6a (strain ATCC BAA-680 / CLIP 11262).